A 235-amino-acid polypeptide reads, in one-letter code: Ribonuclease 3 (235 aa).

Positions 7–135 (FAALEARLGH…VVAAVYLDGG (129 aa)) constitute an RNase III domain. Glutamate 48 is a binding site for Mg(2+). Residue aspartate 52 is part of the active site. 2 residues coordinate Mg(2+): aspartate 121 and glutamate 124. Glutamate 124 is a catalytic residue. The DRBM domain maps to 160-229 (DPKTVLQEWA…ASAFLAREGV (70 aa)).

It belongs to the ribonuclease III family. Homodimer. Requires Mg(2+) as cofactor.

The protein resides in the cytoplasm. It catalyses the reaction Endonucleolytic cleavage to 5'-phosphomonoester.. In terms of biological role, digests double-stranded RNA. Involved in the processing of primary rRNA transcript to yield the immediate precursors to the large and small rRNAs (23S and 16S). Processes some mRNAs, and tRNAs when they are encoded in the rRNA operon. Processes pre-crRNA and tracrRNA of type II CRISPR loci if present in the organism. This Azorhizobium caulinodans (strain ATCC 43989 / DSM 5975 / JCM 20966 / LMG 6465 / NBRC 14845 / NCIMB 13405 / ORS 571) protein is Ribonuclease 3.